The primary structure comprises 339 residues: Ketol-acid reductoisomerase (NADP(+)) (339 aa).

One can recognise a KARI N-terminal Rossmann domain in the interval 1–182 (MRVYYDRDAD…GGGRAGIIET (182 aa)). Residues 24–27 (YGSQ), Arg48, Ser51, Ser53, and 83–86 (DELQ) each bind NADP(+). His108 is a catalytic residue. Gly134 contacts NADP(+). In terms of domain architecture, KARI C-terminal knotted spans 183 to 328 (TFREECETDL…AKLRDMMPWI (146 aa)). Mg(2+)-binding residues include Asp191, Glu195, Glu227, and Glu231. Position 252 (Ser252) interacts with substrate.

The protein belongs to the ketol-acid reductoisomerase family. Mg(2+) serves as cofactor.

It catalyses the reaction (2R)-2,3-dihydroxy-3-methylbutanoate + NADP(+) = (2S)-2-acetolactate + NADPH + H(+). The enzyme catalyses (2R,3R)-2,3-dihydroxy-3-methylpentanoate + NADP(+) = (S)-2-ethyl-2-hydroxy-3-oxobutanoate + NADPH + H(+). Its pathway is amino-acid biosynthesis; L-isoleucine biosynthesis; L-isoleucine from 2-oxobutanoate: step 2/4. It functions in the pathway amino-acid biosynthesis; L-valine biosynthesis; L-valine from pyruvate: step 2/4. In terms of biological role, involved in the biosynthesis of branched-chain amino acids (BCAA). Catalyzes an alkyl-migration followed by a ketol-acid reduction of (S)-2-acetolactate (S2AL) to yield (R)-2,3-dihydroxy-isovalerate. In the isomerase reaction, S2AL is rearranged via a Mg-dependent methyl migration to produce 3-hydroxy-3-methyl-2-ketobutyrate (HMKB). In the reductase reaction, this 2-ketoacid undergoes a metal-dependent reduction by NADPH to yield (R)-2,3-dihydroxy-isovalerate. In Rhodopseudomonas palustris (strain BisB18), this protein is Ketol-acid reductoisomerase (NADP(+)).